A 562-amino-acid chain; its full sequence is NAD-dependent malic enzyme (562 aa).

The active-site Proton donor is the tyrosine 101. Arginine 154 serves as a coordination point for NAD(+). The active-site Proton acceptor is lysine 172. Glutamate 243, aspartate 244, and aspartate 267 together coordinate a divalent metal cation. Positions 267 and 415 each coordinate NAD(+).

Belongs to the malic enzymes family. In terms of assembly, homotetramer. Mg(2+) serves as cofactor. The cofactor is Mn(2+).

It carries out the reaction (S)-malate + NAD(+) = pyruvate + CO2 + NADH. It catalyses the reaction oxaloacetate + H(+) = pyruvate + CO2. This chain is NAD-dependent malic enzyme, found in Colwellia psychrerythraea (strain 34H / ATCC BAA-681) (Vibrio psychroerythus).